Here is a 211-residue protein sequence, read N- to C-terminus: Outer-membrane lipoprotein carrier protein (211 aa).

A signal peptide spans 1–24 (MRNRIIVSACAALAMFAIQAPAHA).

Belongs to the LolA family. As to quaternary structure, monomer.

The protein resides in the periplasm. Its function is as follows. Participates in the translocation of lipoproteins from the inner membrane to the outer membrane. Only forms a complex with a lipoprotein if the residue after the N-terminal Cys is not an aspartate (The Asp acts as a targeting signal to indicate that the lipoprotein should stay in the inner membrane). The polypeptide is Outer-membrane lipoprotein carrier protein (Cupriavidus necator (strain ATCC 17699 / DSM 428 / KCTC 22496 / NCIMB 10442 / H16 / Stanier 337) (Ralstonia eutropha)).